Reading from the N-terminus, the 267-residue chain is Non-homologous end joining protein Ku (267 aa).

The Ku domain maps to A11–A195. Positions G229–G267 are disordered.

Belongs to the prokaryotic Ku family. Homodimer. Interacts with LigD.

With LigD forms a non-homologous end joining (NHEJ) DNA repair enzyme, which repairs dsDNA breaks with reduced fidelity. Binds linear dsDNA with 5'- and 3'- overhangs but not closed circular dsDNA nor ssDNA. Recruits and stimulates the ligase activity of LigD. The protein is Non-homologous end joining protein Ku of Cereibacter sphaeroides (strain KD131 / KCTC 12085) (Rhodobacter sphaeroides).